An 814-amino-acid chain; its full sequence is Thymine dioxygenase JBP1 (814 aa).

The tract at residues 62–264 (QIIGVVLREA…RLTCVFYYRA (203 aa)) is thymine dioxygenase. Fe cation-binding residues include histidine 189, aspartate 191, and histidine 239. Arginine 255 provides a ligand contact to 2-oxoglutarate. A DNA-binding JBP1 domain region spans residues 392–561 (TNLMVSTAVE…IEEARRHGMS (170 aa)).

It belongs to the TET family. JBP1 subfamily. As to quaternary structure, monomer. Binds to DNA as a monomer. Requires Fe(2+) as cofactor.

It is found in the nucleus. The enzyme catalyses thymine + 2-oxoglutarate + O2 = 5-hydroxymethyluracil + succinate + CO2. Functionally, dioxygenase that catalyzes the first step of DNA base J (beta-d-glucosyl-HOMedU) biosynthesis by converting thymine to 5-hydroxymethyluracil (HOMedU). DNA base J is a hypermodified thymidine residue found in the genome of kinetoplastid parasites, which is localized primarily to repetitive DNA, namely the telomeres, and is implicated in the regulation of antigenic variation. Also specifically binds to base J-containing DNA (J-DNA). Involved in propagation and maintenance of DNA base J synthesis initiated by JBP2 by specifically binding already synthesized DNA base J and propagating J synthesis. Thymine dioxygenase activity and J-DNA-binding are independent functions. The chain is Thymine dioxygenase JBP1 (JBP1) from Leishmania major.